A 423-amino-acid polypeptide reads, in one-letter code: Sphingomyelin phosphodiesterase 2 (423 aa).

Glutamate 49 lines the Mg(2+) pocket. The active-site Proton acceptor is histidine 272. 2 helical membrane-spanning segments follow: residues 330–350 (VIGLGLLLLALLCVLAAGGGA) and 354–374 (AILLWTPSVGLVLWAGAFYLF). Positions 400-423 (QDLGPEPQPALLLGQQEGDRTKEQ) are disordered.

This sequence belongs to the neutral sphingomyelinase family. Mg(2+) is required as a cofactor.

Its subcellular location is the cell membrane. The catalysed reaction is a sphingomyelin + H2O = phosphocholine + an N-acylsphing-4-enine + H(+). It carries out the reaction an N-(acyl)-sphingosylphosphocholine + H2O = an N-acyl-sphingoid base + phosphocholine + H(+). The enzyme catalyses 1-O-octadecyl-sn-glycero-3-phosphocholine + H2O = 1-O-octadecyl-sn-glycerol + phosphocholine + H(+). It catalyses the reaction 1-O-hexadecyl-sn-glycero-3-phosphocholine + H2O = 1-O-hexadecyl-sn-glycerol + phosphocholine + H(+). The catalysed reaction is 1-hexadecanoyl-sn-glycero-3-phosphocholine + H2O = 1-hexadecanoyl-sn-glycerol + phosphocholine + H(+). It carries out the reaction a sphingosylphosphocholine + H2O = a sphingoid base + phosphocholine + H(+). The protein operates within lipid metabolism; sphingolipid metabolism. Functionally, catalyzes, at least in vitro, the hydrolysis of sphingomyelin to form ceramide and phosphocholine. Also hydrolyzes 1-O-alkyl-2-lyso-sn-glycero-3-phosphocholine (lyso-platelet-activating factor) in vivo. Also acts on 1-acyl-2-lyso-sn-glycero-3-phosphocholine (lyso-PC) and sphingosylphosphocholine. The sequence is that of Sphingomyelin phosphodiesterase 2 from Homo sapiens (Human).